A 306-amino-acid chain; its full sequence is Ornithine carbamoyltransferase (306 aa).

Carbamoyl phosphate is bound by residues 53–56 (STRT), Q80, R104, and 131–134 (HPCQ). Residues N162, D219, and 223 to 224 (SM) contribute to the L-ornithine site. Residues 259-260 (CL) and R287 each bind carbamoyl phosphate.

It belongs to the aspartate/ornithine carbamoyltransferase superfamily. OTCase family.

It localises to the cytoplasm. It catalyses the reaction carbamoyl phosphate + L-ornithine = L-citrulline + phosphate + H(+). The protein operates within amino-acid degradation; L-arginine degradation via ADI pathway; carbamoyl phosphate from L-arginine: step 2/2. Its function is as follows. Reversibly catalyzes the transfer of the carbamoyl group from carbamoyl phosphate (CP) to the N(epsilon) atom of ornithine (ORN) to produce L-citrulline. The sequence is that of Ornithine carbamoyltransferase from Acinetobacter baumannii (strain AYE).